The following is a 129-amino-acid chain: UPF0344 protein USA300HOU_0928 (129 aa).

4 helical membrane-spanning segments follow: residues 1–21 (MLHL…ATYL), 36–56 (LHMI…WILI), 67–87 (MLLT…EVSI), and 99–119 (MFWI…ILPL).

This sequence belongs to the UPF0344 family.

The protein resides in the cell membrane. In Staphylococcus aureus (strain USA300 / TCH1516), this protein is UPF0344 protein USA300HOU_0928.